The following is a 314-amino-acid chain: Malate dehydrogenase (314 aa).

NAD(+)-binding positions include 12–17 (GSGFTG) and Asp36. Arg87 and Arg93 together coordinate substrate. Residues Asn100 and 123–125 (LTN) each bind NAD(+). Asn125 lines the substrate pocket. A Phosphoserine modification is found at Ser149. A substrate-binding site is contributed by Arg156. The active-site Proton acceptor is the His180.

The protein belongs to the LDH/MDH superfamily. MDH type 3 family.

It catalyses the reaction (S)-malate + NAD(+) = oxaloacetate + NADH + H(+). Its function is as follows. Catalyzes the reversible oxidation of malate to oxaloacetate. This chain is Malate dehydrogenase, found in Shouchella clausii (strain KSM-K16) (Alkalihalobacillus clausii).